A 644-amino-acid chain; its full sequence is Threonine--tRNA ligase (644 aa).

The region spanning 1 to 61 (MINVTLPDGS…DGDAQVAIIT (61 aa)) is the TGS domain. Residues 243-536 (DHRKLGKQME…LIESYAGKLP (294 aa)) form a catalytic region. Residues Cys336, His387, and His513 each coordinate Zn(2+).

This sequence belongs to the class-II aminoacyl-tRNA synthetase family. In terms of assembly, homodimer. It depends on Zn(2+) as a cofactor.

The protein resides in the cytoplasm. It carries out the reaction tRNA(Thr) + L-threonine + ATP = L-threonyl-tRNA(Thr) + AMP + diphosphate + H(+). In terms of biological role, catalyzes the attachment of threonine to tRNA(Thr) in a two-step reaction: L-threonine is first activated by ATP to form Thr-AMP and then transferred to the acceptor end of tRNA(Thr). Also edits incorrectly charged L-seryl-tRNA(Thr). This is Threonine--tRNA ligase from Maricaulis maris (strain MCS10) (Caulobacter maris).